A 189-amino-acid polypeptide reads, in one-letter code: Cancer/testis antigen family 45 member A5 (189 aa).

Basic and acidic residues predominate over residues 1–23 (MTDKTEKVAVDPETVFKRPRECD). 2 disordered regions span residues 1 to 27 (MTDKTEKVAVDPETVFKRPRECDSPSY) and 82 to 118 (DGMMQKPGSNAPVGGNVTSSFSGDDLECRETASSPKS).

Belongs to the CT45 family. Testis specific. Expressed in cancer cell lines.

It is found in the nucleus. The protein is Cancer/testis antigen family 45 member A5 of Homo sapiens (Human).